We begin with the raw amino-acid sequence, 114 residues long: Fluoride-specific ion channel FluC 1 (114 aa).

The next 3 helical transmembrane spans lie at Val28–His48, Ile56–Val76, and Ile91–Leu111. 2 residues coordinate Na(+): Gly66 and Thr69.

Belongs to the fluoride channel Fluc/FEX (TC 1.A.43) family.

Its subcellular location is the cell membrane. It catalyses the reaction fluoride(in) = fluoride(out). With respect to regulation, na(+) is not transported, but it plays an essential structural role and its presence is essential for fluoride channel function. Fluoride-specific ion channel. Important for reducing fluoride concentration in the cell, thus reducing its toxicity. The polypeptide is Fluoride-specific ion channel FluC 1 (Ligilactobacillus salivarius (strain UCC118) (Lactobacillus salivarius)).